The primary structure comprises 268 residues: tRNA pseudouridine synthase A (268 aa).

The active-site Nucleophile is aspartate 52. Substrate is bound at residue tyrosine 110.

This sequence belongs to the tRNA pseudouridine synthase TruA family. Homodimer.

It catalyses the reaction uridine(38/39/40) in tRNA = pseudouridine(38/39/40) in tRNA. In terms of biological role, formation of pseudouridine at positions 38, 39 and 40 in the anticodon stem and loop of transfer RNAs. The chain is tRNA pseudouridine synthase A from Prochlorococcus marinus (strain AS9601).